Reading from the N-terminus, the 261-residue chain is MQDRNFDDIAEKFSRNIYGTTKGQLRQAILWQDLDRVLAEMGPQKLRVLDAGGGEGQTAIKMAERGHQVILCDLSAQMIDRAKQAAEAKGVSDNMQFIHCAAQDVASHLETPVDLILFHAVLEWVADPRSVLQTLWSVLRPGGVLSLMFYNAHGLLMHNMVAGNFDYVQAGMPKKKKRTLSPDYPRDPTQVYLWLEEAGWQIMGKTGVRVFHDYLREKHQQRDCYEALLELETRYCRQEPYITLGRYIHVTARKPQSKDKV.

S-adenosyl-L-methionine contacts are provided by residues R26, G52–G53, D73, A102–Q103, and H119.

Belongs to the class I-like SAM-binding methyltransferase superfamily. CmoM family. As to quaternary structure, homodimer.

The catalysed reaction is 5-carboxymethoxyuridine(34) in tRNA + S-adenosyl-L-methionine = 5-methoxycarbonylmethoxyuridine(34) in tRNA + S-adenosyl-L-homocysteine. Catalyzes the methylation of 5-carboxymethoxyuridine (cmo5U) to form 5-methoxycarbonylmethoxyuridine (mcmo5U) at position 34 in tRNAs. The polypeptide is tRNA 5-carboxymethoxyuridine methyltransferase (Escherichia coli O157:H7).